A 245-amino-acid polypeptide reads, in one-letter code: Suppressor of aph-1 (245 aa).

A GYF domain is found at 12–60 (DTKWHYLGPDSEKYGPYMSKDMLFWLQAGYFNDGLQLKTENEPNYHTLG). Residues 126 to 166 (NQNGPPMGAQMHSQPPSEPIDAGSLSHTPDSENETRLNEQT) form a disordered region.

In terms of biological role, involved in negative regulation of early and late embryonic Notch signaling. The chain is Suppressor of aph-1 from Caenorhabditis elegans.